Consider the following 137-residue polypeptide: Small integral membrane protein 9 (137 aa).

Positions 1–23 are cleaved as a signal peptide; that stretch reads MKPLKLFCIGLLLCPLVCLLLET. The Extracellular portion of the chain corresponds to 24-84; the sequence is APPPSALLTL…NHLSDFFKSS (61 aa). A helical membrane pass occupies residues 85-105; it reads IPPAAIFALFVTTAIMRAAIV. Topologically, residues 106–137 are cytoplasmic; it reads NKRLEEPHRQWTIDQRSSLEMQNMNLIKLFGG.

It is found in the cell membrane. In Mus musculus (Mouse), this protein is Small integral membrane protein 9 (Smim9).